Here is a 513-residue protein sequence, read N- to C-terminus: Noroxomaritidine synthase (513 aa).

Residues 14 to 34 traverse the membrane as a helical segment; that stretch reads HYPEILIAIACFLIFSLLLSA. Position 458 (cysteine 458) interacts with heme.

Belongs to the cytochrome P450 family. It depends on heme as a cofactor.

The protein resides in the membrane. The enzyme catalyses 4'-O-methylnorbelladine + reduced [NADPH--hemoprotein reductase] + O2 = (10bS,4aR)-noroxomaritidine + oxidized [NADPH--hemoprotein reductase] + 2 H2O + H(+). The catalysed reaction is 4'-O-methylnorbelladine + reduced [NADPH--hemoprotein reductase] + O2 = (10bR,4aS)-noroxomaritidine + oxidized [NADPH--hemoprotein reductase] + 2 H2O + H(+). It participates in alkaloid biosynthesis. Cytochrome P450 that catalyzes an intramolecular para-para' C-C phenol coupling of 4'-O-methylnorbelladine in alkaloids biosynthesis, including haemanthamine- and crinamine-type alkaloids, promising anticancer agents. Catalyzes the formation of (10bR,4aS)-noroxomaritidine and (10bS,4aR)-noroxomaritidine from 4'-O-methylnorbelladine. Also produces N-demethylnarwedine as a minor product. Involved in the biosynthesis of haemanthamine. Can also use 4'-O-methyl-N-methylnorbelladine, (S)- and (R)-coclaurine as substrates, but not 3'-O-methylnorbelladine, 3',4'-O-dimethylnorbelladine, norbelladine, haemanthamine, (10bS,4aR)- or (10bR,4aS)-noroxomaritidine, isovanillin or tyramine. The protein is Noroxomaritidine synthase of Narcissus aff. pseudonarcissus MK-2014 (Daffodil).